A 442-amino-acid chain; its full sequence is tRNA-2-methylthio-N(6)-dimethylallyladenosine synthase (442 aa).

The MTTase N-terminal domain occupies 6–122; it reads RKFYIHTFGC…LPALIAEAGD (117 aa). 6 residues coordinate [4Fe-4S] cluster: cysteine 15, cysteine 51, cysteine 85, cysteine 157, cysteine 161, and cysteine 164. One can recognise a Radical SAM core domain in the interval 143–373; that stretch reads RTQSLNAFVP…IDLQNGISAE (231 aa). The 64-residue stretch at 376–439 folds into the TRAM domain; sequence GLAPGSVVEV…SATLFGQSAE (64 aa).

Belongs to the methylthiotransferase family. MiaB subfamily. In terms of assembly, monomer. [4Fe-4S] cluster is required as a cofactor.

The protein resides in the cytoplasm. It catalyses the reaction N(6)-dimethylallyladenosine(37) in tRNA + (sulfur carrier)-SH + AH2 + 2 S-adenosyl-L-methionine = 2-methylsulfanyl-N(6)-dimethylallyladenosine(37) in tRNA + (sulfur carrier)-H + 5'-deoxyadenosine + L-methionine + A + S-adenosyl-L-homocysteine + 2 H(+). Functionally, catalyzes the methylthiolation of N6-(dimethylallyl)adenosine (i(6)A), leading to the formation of 2-methylthio-N6-(dimethylallyl)adenosine (ms(2)i(6)A) at position 37 in tRNAs that read codons beginning with uridine. In Chlorobium phaeobacteroides (strain DSM 266 / SMG 266 / 2430), this protein is tRNA-2-methylthio-N(6)-dimethylallyladenosine synthase.